Consider the following 419-residue polypeptide: 3-oxo-isoapionate-4-phosphate decarboxylase (419 aa).

Mg(2+) contacts are provided by Lys-179, Asp-181, and Glu-182. Position 179 is an N6-carboxylysine (Lys-179).

It belongs to the RuBisCO large chain family. It depends on Mg(2+) as a cofactor.

It catalyses the reaction 3-oxoisoapionate 4-phosphate + H(+) = L-erythrulose 1-phosphate + CO2. It functions in the pathway carbohydrate metabolism. Involved in catabolism of D-apiose. Catalyzes the decarboxylation of 3-oxo-isoapionate 4-phosphate to L-erythrulose 1-phosphate. This chain is 3-oxo-isoapionate-4-phosphate decarboxylase, found in Rhizobium rhizogenes (strain K84 / ATCC BAA-868) (Agrobacterium radiobacter).